Here is an 828-residue protein sequence, read N- to C-terminus: DNA gyrase subunit A (828 aa).

The 466-residue stretch at 32–497 (LPDVRDGLKP…EVLSLEDEDL (466 aa)) folds into the Topo IIA-type catalytic domain. The active-site O-(5'-phospho-DNA)-tyrosine intermediate is the Tyr120. The short motif at 524–530 (QKRGGRG) is the GyrA-box element.

This sequence belongs to the type II topoisomerase GyrA/ParC subunit family. In terms of assembly, heterotetramer, composed of two GyrA and two GyrB chains. In the heterotetramer, GyrA contains the active site tyrosine that forms a transient covalent intermediate with DNA, while GyrB binds cofactors and catalyzes ATP hydrolysis.

The protein resides in the cytoplasm. It catalyses the reaction ATP-dependent breakage, passage and rejoining of double-stranded DNA.. Functionally, a type II topoisomerase that negatively supercoils closed circular double-stranded (ds) DNA in an ATP-dependent manner to modulate DNA topology and maintain chromosomes in an underwound state. Negative supercoiling favors strand separation, and DNA replication, transcription, recombination and repair, all of which involve strand separation. Also able to catalyze the interconversion of other topological isomers of dsDNA rings, including catenanes and knotted rings. Type II topoisomerases break and join 2 DNA strands simultaneously in an ATP-dependent manner. This chain is DNA gyrase subunit A, found in Streptococcus pyogenes serotype M6 (strain ATCC BAA-946 / MGAS10394).